Here is an 88-residue protein sequence, read N- to C-terminus: Prolevitide (88 aa).

Positions Met1–Ala20 are cleaved as a signal peptide. Gln74 carries the pyrrolidone carboxylic acid modification. Position 87 is a glutamine amide (Gln87).

The protein belongs to the gastrin/cholecystokinin family. In terms of tissue distribution, expressed by the skin glands.

It is found in the secreted. This Xenopus laevis (African clawed frog) protein is Prolevitide.